Here is a 516-residue protein sequence, read N- to C-terminus: L-amino-acid oxidase (516 aa).

An N-terminal signal peptide occupies residues 1-18 (MNVFFMFSLLFLAALGSC). Cysteines 28 and 189 form a disulfide. FAD contacts are provided by residues 61 to 62 (MA), 81 to 82 (EA), arginine 89, and 103 to 106 (GPMR). Residues arginine 106 and histidine 239 each contribute to the substrate site. Valine 279 serves as a coordination point for FAD. A disulfide bond links cysteine 349 and cysteine 430. Asparagine 379 carries N-linked (GlcNAc...) asparagine glycosylation. Tyrosine 390 serves as a coordination point for substrate. Residues glutamate 475 and 482-487 (GWIDST) each bind FAD. Residue 482–483 (GW) coordinates substrate.

Belongs to the flavin monoamine oxidase family. FIG1 subfamily. Homodimer; non-covalently linked. Requires FAD as cofactor. Post-translationally, N-glycosylated. In terms of tissue distribution, expressed by the venom gland.

The protein localises to the secreted. It catalyses the reaction an L-alpha-amino acid + O2 + H2O = a 2-oxocarboxylate + H2O2 + NH4(+). The enzyme catalyses L-leucine + O2 + H2O = 4-methyl-2-oxopentanoate + H2O2 + NH4(+). The catalysed reaction is L-phenylalanine + O2 + H2O = 3-phenylpyruvate + H2O2 + NH4(+). It carries out the reaction L-methionine + O2 + H2O = 4-methylsulfanyl-2-oxobutanoate + H2O2 + NH4(+). It catalyses the reaction L-arginine + O2 + H2O = 5-guanidino-2-oxopentanoate + H2O2 + NH4(+). Functionally, catalyzes an oxidative deamination of predominantly hydrophobic and aromatic L-amino acids, thus producing hydrogen peroxide that may contribute to the diverse toxic effects of this enzyme. Is active on L-Arg, L-Phe, L-Met, and L-Leu and is weakly active on L-Val. Exhibits diverse biological activities, such as hemorrhage, hemolysis, edema, apoptosis of vascular endothelial cells or tumor cell lines, antibacterial and antiparasitic activities, as well as regulation of platelet aggregation. Its effect on platelets is controversial, since it either induces aggregation or inhibits agonist-induced aggregation. These different effects are probably due to different experimental conditions. This is L-amino-acid oxidase from Crotalus adamanteus (Eastern diamondback rattlesnake).